Reading from the N-terminus, the 30-residue chain is Conotoxin CcTx (30 aa).

P2 carries the 4-hydroxyproline modification. S7 is a glycosylation site (O-linked (HexNAc...) serine). Disulfide bonds link C12-C21, C13-C26, and C24-C30. 2 positions are modified to 4-hydroxyproline: P17 and P22.

Post-translationally, O-glycosylated at Ser-7 by a core type 9 glycan, containing both D- and L-galactose units (alpha-L-Galp-(1-&gt;4)-alpha-D- GlcpNAc-(1-&gt;6)-[alpha-L-Galp-(1-&gt;2)-bets-D-Galp-(1-&gt;3)-]alpha-D-GalpNAc-(1-&gt;O)). In terms of tissue distribution, expressed by the venom duct.

Its subcellular location is the secreted. May specifically activate neuronal voltage-gated sodium channels (Nav) at the resting membrane potential. Causes a marked contraction and extension of the caudal and dorsal fins in fish and noticeable spontaneous contractions of isolated frog neuromuscular preparations. In Conus consors (Singed cone), this protein is Conotoxin CcTx.